The sequence spans 133 residues: Small ribosomal subunit protein uS19 (133 aa).

It belongs to the universal ribosomal protein uS19 family.

In terms of biological role, protein S19 forms a complex with S13 that binds strongly to the 16S ribosomal RNA. This chain is Small ribosomal subunit protein uS19, found in Thermococcus onnurineus (strain NA1).